We begin with the raw amino-acid sequence, 142 residues long: Hemoglobin subunit alpha 1 (142 aa).

At serine 1 the chain carries N-acetylserine. The Globin domain maps to 1 to 142 (SLSDKDKAAV…VSLALSERYR (142 aa)). Residue histidine 59 participates in O2 binding. Histidine 88 is a heme b binding site.

This sequence belongs to the globin family. In terms of assembly, hb1 is a heterotetramer of two alpha-1 chains and two beta-1 chains. Hb2 is a heterotetramer of two alpha-2 chains and two beta-1 chains. HbC is a heterotetramer of two alpha-1 chains and two beta-2 chains. Red blood cells.

Functionally, involved in oxygen transport from gills to the various peripheral tissues. The chain is Hemoglobin subunit alpha 1 from Eleginops maclovinus (Patagonian blennie).